Consider the following 216-residue polypeptide: Ras-related protein Rab-5C (216 aa).

GTP is bound by residues S30, A31, G33, K34, S35, S36, H47, E48, T53, and G79. S35 is a binding site for Mg(2+). 2 short sequence motifs (switch) span residues 45 to 57 and 78 to 94; these read QFHEYQESTIGAA and AGQERYHSLAPMYYRGA. Residue T53 participates in Mg(2+) binding. S85 carries the phosphoserine; by LRRK2 modification. N134, K135, D137, A165, and K166 together coordinate GTP. The interval 185 to 216 is disordered; it reads NEPQNATGAPGRNRGVDLQENNPASRSQCCSN. Residues 203–216 show a composition bias toward polar residues; the sequence is QENNPASRSQCCSN. S-geranylgeranyl cysteine attachment occurs at residues C213 and C214.

The protein belongs to the small GTPase superfamily. Rab family. Interacts with EEA1. Interacts with INCA1. Interacts with GDI1, GDI2, CHML and CHM; phosphorylation at Ser-85 disrupts this interaction. Requires Mg(2+) as cofactor. In terms of processing, phosphorylation of Ser-85 in the switch II region by LRRK2 prevents the association of RAB regulatory proteins, including CHM, CHML and RAB GDP dissociation inhibitors GDI1 and GDI2. (Microbial infection) Glycosylated on arginine residues by S.typhimurium protein Ssek3.

Its subcellular location is the cell membrane. The protein localises to the early endosome membrane. The protein resides in the melanosome. It catalyses the reaction GTP + H2O = GDP + phosphate + H(+). Its activity is regulated as follows. Regulated by guanine nucleotide exchange factors (GEFs) which promote the exchange of bound GDP for free GTP. Regulated by GTPase activating proteins (GAPs) which increase the GTP hydrolysis activity. Inhibited by GDP dissociation inhibitors (GDIs). Functionally, the small GTPases Rab are key regulators of intracellular membrane trafficking, from the formation of transport vesicles to their fusion with membranes. Rabs cycle between an inactive GDP-bound form and an active GTP-bound form that is able to recruit to membranes different sets of downstream effectors directly responsible for vesicle formation, movement, tethering and fusion. The sequence is that of Ras-related protein Rab-5C from Homo sapiens (Human).